The following is a 263-amino-acid chain: (E)-2-((N-methylformamido)methylene)succinate hydrolase (263 aa).

The Nucleophile role is filled by Ser96. Active-site residues include Asn120 and His241.

The protein belongs to the AB hydrolase superfamily. As to quaternary structure, monomer.

The catalysed reaction is (E)-2-((N-methylformamido) methylene)succinate + 2 H2O + H(+) = succinate semialdehyde + methylamine + formate + CO2. Functionally, involved in the degradation of the pyridine ring of trigonelline (TG; N-methylnicotinate) into succinate and methylamine as carbon and nitrogen sources, respectively. Catalyzes the hydrolysis of (E)-2-((N-methylformamido)methylene)succinate (MFMS) into formic acid, succinate semialdehyde (SSA), methylamine and carbon dioxide. The chain is (E)-2-((N-methylformamido)methylene)succinate hydrolase from Acinetobacter baylyi (strain ATCC 33305 / BD413 / ADP1).